The chain runs to 279 residues: Release factor glutamine methyltransferase (279 aa).

2 residues coordinate S-adenosyl-L-methionine: Asp-139 and Asn-182. Position 182–185 (182–185 (NPPY)) interacts with substrate.

Belongs to the protein N5-glutamine methyltransferase family. PrmC subfamily.

It carries out the reaction L-glutaminyl-[peptide chain release factor] + S-adenosyl-L-methionine = N(5)-methyl-L-glutaminyl-[peptide chain release factor] + S-adenosyl-L-homocysteine + H(+). Methylates the class 1 translation termination release factors RF1/PrfA and RF2/PrfB on the glutamine residue of the universally conserved GGQ motif. The polypeptide is Release factor glutamine methyltransferase (Thermodesulfovibrio yellowstonii (strain ATCC 51303 / DSM 11347 / YP87)).